The primary structure comprises 37 residues: Non-specific lipid-transfer protein (37 aa).

This sequence belongs to the plant LTP family.

Its function is as follows. Plant non-specific lipid-transfer proteins transfer phospholipids as well as galactolipids across membranes. May play a role in wax or cutin deposition in the cell walls of expanding epidermal cells and certain secretory tissues. The protein is Non-specific lipid-transfer protein of Artemisia vulgaris (Mugwort).